The primary structure comprises 778 residues: Actin-binding LIM protein 1 (778 aa).

4 consecutive LIM zinc-binding domains span residues Ile97–Thr156, Thr156–Ser216, Ser224–Val283, and Val283–Glu343. Phosphoserine is present on Ser216. Positions Ser339 to His370 are disordered. Residues Pro360–Gly369 show a composition bias toward low complexity. A Phosphoserine modification is found at Ser367. Residues Tyr373 and Tyr396 each carry the phosphotyrosine modification. 2 disordered regions span residues Tyr414 to Lys510 and Ala552 to Leu597. 3 positions are modified to phosphoserine: Ser422, Ser426, and Ser431. Over residues Leu423–Pro434 the composition is skewed to polar residues. Thr433 is modified (phosphothreonine). Ser435 carries the post-translational modification Phosphoserine. Tyr439 bears the Phosphotyrosine mark. Residues Arg449 to Pro474 are compositionally biased toward polar residues. 5 positions are modified to phosphoserine: Ser452, Ser455, Ser458, Ser498, and Ser587. A coiled-coil region spans residues Glu590–Leu614. Lys620 is covalently cross-linked (Glycyl lysine isopeptide (Lys-Gly) (interchain with G-Cter in SUMO2)). A phosphoserine mark is found at Ser640, Ser655, Ser677, and Ser706. The region spanning Met710–Phe778 is the HP domain.

In terms of assembly, binds F-actin. Interacts with ABRA. As to expression, detected in liver, heart, skeletal muscle, brain and retina, where it is concentrated in the inner segment and in the outer plexiform layers.

It is found in the cytoplasm. The protein localises to the cytoskeleton. Functionally, may act as scaffold protein. May play a role in the development of the retina. Has been suggested to play a role in axon guidance. The polypeptide is Actin-binding LIM protein 1 (ABLIM1) (Homo sapiens (Human)).